The sequence spans 399 residues: Acetate kinase (399 aa).

Position 7 (N7) interacts with Mg(2+). K14 provides a ligand contact to ATP. R89 contributes to the substrate binding site. Catalysis depends on D146, which acts as the Proton donor/acceptor. Residues 206 to 210 (HIGSG), 280 to 282 (DFR), and 328 to 332 (GIGEN) each bind ATP. E382 is a Mg(2+) binding site.

Belongs to the acetokinase family. As to quaternary structure, homodimer. The cofactor is Mg(2+). It depends on Mn(2+) as a cofactor.

The protein resides in the cytoplasm. It carries out the reaction acetate + ATP = acetyl phosphate + ADP. It functions in the pathway metabolic intermediate biosynthesis; acetyl-CoA biosynthesis; acetyl-CoA from acetate: step 1/2. In terms of biological role, catalyzes the formation of acetyl phosphate from acetate and ATP. Can also catalyze the reverse reaction. The polypeptide is Acetate kinase (Campylobacter hominis (strain ATCC BAA-381 / DSM 21671 / CCUG 45161 / LMG 19568 / NCTC 13146 / CH001A)).